We begin with the raw amino-acid sequence, 567 residues long: Urease subunit alpha (567 aa).

The Urease domain occupies G129 to F567. Residues H134, H136, and K217 each coordinate Ni(2+). At K217 the chain carries N6-carboxylysine. Position 219 (H219) interacts with substrate. H246 and H272 together coordinate Ni(2+). H320 acts as the Proton donor in catalysis. D360 contacts Ni(2+).

This sequence belongs to the metallo-dependent hydrolases superfamily. Urease alpha subunit family. As to quaternary structure, heterotrimer of UreA (gamma), UreB (beta) and UreC (alpha) subunits. Three heterotrimers associate to form the active enzyme. Requires Ni cation as cofactor. Post-translationally, carboxylation allows a single lysine to coordinate two nickel ions.

It localises to the cytoplasm. The enzyme catalyses urea + 2 H2O + H(+) = hydrogencarbonate + 2 NH4(+). It functions in the pathway nitrogen metabolism; urea degradation; CO(2) and NH(3) from urea (urease route): step 1/1. The sequence is that of Urease subunit alpha from Pseudomonas entomophila (strain L48).